The primary structure comprises 142 residues: 2-aminomuconate deaminase (142 aa).

Belongs to the 2-aminomuconate deaminase family. Homotetramer.

The enzyme catalyses (2Z,4E)-2-aminomuconate + H2O = (3E)-2-oxohex-3-enedioate + NH4(+). Slightly inhibited by Pb(2+), Hg(+) and Cu(2+). Functionally, involved in the modified meta-cleavage pathway for the 2-aminophenol catabolism. Only active toward 2-aminomuconic acid. The sequence is that of 2-aminomuconate deaminase (amnD) from Pseudomonas sp.